The sequence spans 268 residues: Enoyl-[acyl-carrier-protein] reductase [NADH] (268 aa).

NAD(+) is bound by residues 20–21 (SI), 64–65 (DV), and 95–96 (IA). Tyr-157 serves as a coordination point for substrate. Lys-164 and Ile-193 together coordinate NAD(+).

This sequence belongs to the short-chain dehydrogenases/reductases (SDR) family. FabI subfamily. As to quaternary structure, homodimer. Homotetramer.

It carries out the reaction a 2,3-saturated acyl-[ACP] + NAD(+) = a (2E)-enoyl-[ACP] + NADH + H(+). The enzyme catalyses a 2,3-saturated acyl-CoA + NAD(+) = a (2E)-enoyl-CoA + NADH + H(+). It participates in lipid metabolism; mycolic acid biosynthesis. Functionally, enoyl-ACP reductase of the type II fatty acid syntase (FAS-II) system, which is involved in the biosynthesis of mycolic acids, a major component of mycobacterial cell walls. Catalyzes the NADH-dependent reduction of the double bond of 2-trans-enoyl-[acyl-carrier protein], an essential step in the fatty acid elongation cycle of the FAS-II pathway. Shows preference for long-chain fatty acyl thioester substrates, and can also use 2-trans-enoyl-CoAs as alternative substrates. The mycobacterial FAS-II system utilizes the products of the FAS-I system as primers to extend fatty acyl chain lengths up to C56, forming the meromycolate chain that serves as the precursor for final mycolic acids. The polypeptide is Enoyl-[acyl-carrier-protein] reductase [NADH] (Mycobacterium avium).